We begin with the raw amino-acid sequence, 309 residues long: General transcription factor IIH subunit 3 (309 aa).

The C4-type zinc-finger motif lies at Cys269–Cys286.

The protein belongs to the TFB4 family. In terms of assembly, part of a TFIID-containing RNA polymerase II pre-initiation complex that is composed of TBP and at least GTF2A1, GTF2A2, GTF2E1, GTF2E2, GTF2F1, GTF2H2, GTF2H3, GTF2H4, GTF2H5, GTF2B, TCEA1, ERCC2, ERCC3, TAF1, TAF2, TAF3, TAF4, TAF5, TAF6, TAF7, TAF8, TAF9, TAF10, TAF11, TAF12 and TAF13. Component of the 7-subunit TFIIH core complex composed of XPB/ERCC3, XPD/ERCC2, GTF2H1, GTF2H2, GTF2H3, GTF2H4 and GTF2H5, which is active in NER. The core complex associates with the 3-subunit CDK-activating kinase (CAK) module composed of CCNH/cyclin H, CDK7 and MNAT1 to form the 10-subunit holoenzyme (holo-TFIIH) active in transcription. Interacts with RARA; the interaction requires prior phosphorylation of RARA on 'Ser-369' which then enhances interaction of RARA with CDK7.

The protein resides in the nucleus. In terms of biological role, component of the general transcription and DNA repair factor IIH (TFIIH) core complex, which is involved in general and transcription-coupled nucleotide excision repair (NER) of damaged DNA and, when complexed to CAK, in RNA transcription by RNA polymerase II. In NER, TFIIH acts by opening DNA around the lesion to allow the excision of the damaged oligonucleotide and its replacement by a new DNA fragment. In transcription, TFIIH has an essential role in transcription initiation. When the pre-initiation complex (PIC) has been established, TFIIH is required for promoter opening and promoter escape. Phosphorylation of the C-terminal tail (CTD) of the largest subunit of RNA polymerase II by the kinase module CAK controls the initiation of transcription. The polypeptide is General transcription factor IIH subunit 3 (Gtf2h3) (Mus musculus (Mouse)).